Consider the following 199-residue polypeptide: MVNYPHQLIRKTTVTKSKKKKIDFANRGMSFEAAINATNDYYLSHELAVIHKKPTPVQIVKVDYPKRSRAKIVEAYFRQASTTDYSGVYKGYYIDFEAKETRQKTAMPMKNFHAHQIEHMANVLQQKGICFVLLHFSTLKETYLLPANELISFYQIDKGNKSMPIDYIRKNGFFVKESAFPQVPYLDIIEEKLLGGDYN.

Residues threonine 82, aspartate 84, glutamate 97, and glutamine 116 each coordinate Mg(2+).

This sequence belongs to the RecU family. Mg(2+) serves as cofactor.

It localises to the cytoplasm. The enzyme catalyses Endonucleolytic cleavage at a junction such as a reciprocal single-stranded crossover between two homologous DNA duplexes (Holliday junction).. In terms of biological role, endonuclease that resolves Holliday junction intermediates in genetic recombination. Cleaves mobile four-strand junctions by introducing symmetrical nicks in paired strands. Promotes annealing of linear ssDNA with homologous dsDNA. Required for DNA repair, homologous recombination and chromosome segregation. The polypeptide is Holliday junction resolvase RecU (Streptococcus agalactiae serotype Ia (strain ATCC 27591 / A909 / CDC SS700)).